The primary structure comprises 237 residues: BTB/POZ domain-containing protein KCTD6 (237 aa).

The BTB domain occupies 12–81 (HPVTLNVGGH…LRTSELTLPV (70 aa)).

As to quaternary structure, homopentamer. May be part of a cullin-containing E3 ubiquitin-protein ligase complex.

The protein operates within protein modification; protein ubiquitination. Probable substrate-specific adapter of a cullin-containing E3 ubiquitin-protein ligase complex mediating the ubiquitination and subsequent proteasomal degradation of target proteins. The polypeptide is BTB/POZ domain-containing protein KCTD6 (kctd6) (Danio rerio (Zebrafish)).